A 607-amino-acid polypeptide reads, in one-letter code: UvrABC system protein C (607 aa).

The GIY-YIG domain maps to 29 to 106; that stretch reads DKPGVYLMKD…IKKHNPKYNI (78 aa). Residues 211–246 form the UVR domain; it reads GAILKALEKKMKEASENLEFERAKEYRDLMEDLKKV.

This sequence belongs to the UvrC family. In terms of assembly, interacts with UvrB in an incision complex.

It localises to the cytoplasm. The UvrABC repair system catalyzes the recognition and processing of DNA lesions. UvrC both incises the 5' and 3' sides of the lesion. The N-terminal half is responsible for the 3' incision and the C-terminal half is responsible for the 5' incision. This chain is UvrABC system protein C, found in Desulfitobacterium hafniense (strain Y51).